A 187-amino-acid polypeptide reads, in one-letter code: Ribonuclease M5 (187 aa).

Residues 5-88 form the Toprim domain; it reads KEVIVVEGKD…AFLPRKAGVP (84 aa). Positions 11, 57, and 59 each coordinate Mg(2+).

Belongs to the ribonuclease M5 family. Mg(2+) serves as cofactor.

Its subcellular location is the cytoplasm. It carries out the reaction Endonucleolytic cleavage of RNA, removing 21 and 42 nucleotides, respectively, from the 5'- and 3'-termini of a 5S-rRNA precursor.. Required for correct processing of both the 5' and 3' ends of 5S rRNA precursor. Cleaves both sides of a double-stranded region yielding mature 5S rRNA in one step. The protein is Ribonuclease M5 of Lactiplantibacillus plantarum (strain ATCC BAA-793 / NCIMB 8826 / WCFS1) (Lactobacillus plantarum).